A 238-amino-acid chain; its full sequence is Uridylate kinase (238 aa).

ATP is bound at residue 12-15 (KLSG). Gly54 lines the UMP pocket. ATP contacts are provided by Gly55 and Arg59. UMP is bound by residues Asp74 and 135 to 142 (TGNPYFST). Residues Tyr168 and Asp171 each contribute to the ATP site.

Belongs to the UMP kinase family. In terms of assembly, homohexamer.

Its subcellular location is the cytoplasm. The enzyme catalyses UMP + ATP = UDP + ADP. The protein operates within pyrimidine metabolism; CTP biosynthesis via de novo pathway; UDP from UMP (UMPK route): step 1/1. Its activity is regulated as follows. Inhibited by UTP. Its function is as follows. Catalyzes the reversible phosphorylation of UMP to UDP. The polypeptide is Uridylate kinase (Syntrophomonas wolfei subsp. wolfei (strain DSM 2245B / Goettingen)).